The primary structure comprises 133 residues: Large-conductance mechanosensitive channel (133 aa).

Transmembrane regions (helical) follow at residues 10–30 and 76–96; these read FAMR…GAFG and GAFI…FLMI.

This sequence belongs to the MscL family. Homopentamer.

The protein resides in the cell inner membrane. In terms of biological role, channel that opens in response to stretch forces in the membrane lipid bilayer. May participate in the regulation of osmotic pressure changes within the cell. The polypeptide is Large-conductance mechanosensitive channel (Pasteurella multocida (strain Pm70)).